The sequence spans 113 residues: Transcriptional regulator RamA (113 aa).

The region spanning 9–107 is the HTH araC/xylS-type domain; that stretch reads DTIVEWIDDN…NQPPGAYRKE (99 aa). 2 DNA-binding regions (H-T-H motif) span residues 26–47 and 74–97; these read DDIARHAGYSKWHLQRLFLQYK and VYDICLKYGFDSQQTFTRVFTRTF.

In terms of assembly, monomer. Interacts with the C-terminus of RNAP subunit RpoA when part of class I or class II promoter complexes. Also interacts with sigma-70/RpoD in class II promoter complexes.

Its function is as follows. Transcriptional regulator. Binds to regulatory regions of target genes, including its own gene, efflux pump operon acrAB, antisense RNA gene micF, and various genes involved in lipid A biosynthesis, including lpxO and lpxL-2. Regulates expression of many genes, perhaps including its own; activates various lipid A biosynthetic genes, and as a result of activating acrAB, confers multidrug resistance. Plays a role in virulence and survival in host cells. This is Transcriptional regulator RamA from Klebsiella pneumoniae subsp. pneumoniae (strain HS11286).